We begin with the raw amino-acid sequence, 593 residues long: Pyruvate kinase isozyme A, chloroplastic (593 aa).

Positions 57-94 (DEPQSSPVLVSENGSGGVLSSATQEYGRNAAPGTDSSS) are disordered. R144 contributes to the substrate binding site. N146, D178, and T179 together coordinate K(+). 146–149 (NMCH) contacts ATP. Position 343 (E343) interacts with Mg(2+). Substrate contacts are provided by G366, D367, and S399. D367 provides a ligand contact to Mg(2+).

Belongs to the pyruvate kinase family. It depends on Mg(2+) as a cofactor. K(+) is required as a cofactor. Highest levels in roots. Also found in stems, leaves and flowers.

Its subcellular location is the plastid. The protein localises to the chloroplast. The enzyme catalyses pyruvate + ATP = phosphoenolpyruvate + ADP + H(+). The protein operates within carbohydrate degradation; glycolysis; pyruvate from D-glyceraldehyde 3-phosphate: step 5/5. The chain is Pyruvate kinase isozyme A, chloroplastic from Nicotiana tabacum (Common tobacco).